We begin with the raw amino-acid sequence, 623 residues long: MLAWRPGRPDGCQAAGGRRYNPGHDCIKASVSLNSAARNAPAGSQPVKAELWKRVYSRVGSYWKGLVLAVLLMAGAAATQPTLAVIMKPLLDDGFSGAKPHYVWFLPLAVVGLILLRGICNFFSDYLLAWVANNVLRGIRGEMFERLLGLPDADFKRGDTGRLLNRFTIDAGNVTGYATDVITVLVRETLVVIALIGVLLYMSWALTLIILVMLPVSVGIARAFTRRLRRINRETVNMNAELTRVVSEGIDGQRVIKLFDGYDAERRRFDFVNSRLRRFAMRSATADAALTPLTQVCISVAVGAVIAVALSQANSGALTVGSFASFMAALAQIFDPIKRLTNLAGKMQKMLVAAESVFTLVDQTPEADAGTRALPEPVRGKVEFRAVSHRFPDADRDTVSAVSFLVEPGQTVALVGRSGSGKTTLVNMLPRFVLPDGGDILFDDVPIQDLTLRSLRSHLSLVSQDVVLFDDTIAANVGYGAGGTVDDARVRDALAAANLLEFVDGLPLGIHTPVGQNAARLSGGQRQRLAIARALIKNAPVLILDEATSALDNESERQVQASLERLMRGRTTLVIAHRLSTVQNADRIIVLDAGKIVEHGPHSELLAANGLYASLYNMQFRED.

5 consecutive transmembrane segments (helical) span residues 66-86, 103-123, 190-210, 290-310, and 317-337; these read LVLA…LAVI, VWFL…CNFF, LVVI…TLII, LTPL…AVAL, and ALTV…FDPI. Residues 67 to 349 form the ABC transmembrane type-1 domain; it reads VLAVLLMAGA…LTNLAGKMQK (283 aa). One can recognise an ABC transporter domain in the interval 382 to 618; sequence VEFRAVSHRF…NGLYASLYNM (237 aa). Residue 416–423 participates in ATP binding; it reads GRSGSGKT.

Belongs to the ABC transporter superfamily. Lipid exporter (TC 3.A.1.106) family. As to quaternary structure, homodimer.

It is found in the cell inner membrane. The enzyme catalyses ATP + H2O + lipid A-core oligosaccharideSide 1 = ADP + phosphate + lipid A-core oligosaccharideSide 2.. Involved in lipopolysaccharide (LPS) biosynthesis. Translocates lipid A-core from the inner to the outer leaflet of the inner membrane. Transmembrane domains (TMD) form a pore in the inner membrane and the ATP-binding domain (NBD) is responsible for energy generation. The protein is ATP-dependent lipid A-core flippase of Bordetella pertussis (strain Tohama I / ATCC BAA-589 / NCTC 13251).